The chain runs to 277 residues: MKVISSIQELRDQLRGQNRTAFVPTMGNLHEGHLSLMRLARQHGDPVVASIFVNRLQFGPNEDFDKYPRTLEADIEKLQKENVYVLFAPTERDMYPQPQEYRVHPPHDLGDILEGEFRPGFFTGVCTVVMKLMSCVQPRVAVFGKKDYQQLMIVRAMTEQFALPTDIVAAETVRDTDGLALSSRNRYLTQTERAEAPMLAATLQGVRQAVLSGNRDFAKLERDAMASLAARGWKPDYIAIRKRSNLIAPAAQDLDAPLVVLAAAKLGATRLIDNLEI.

An ATP-binding site is contributed by 26–33 (MGNLHEGH). Residue histidine 33 is the Proton donor of the active site. Glutamine 57 provides a ligand contact to (R)-pantoate. Glutamine 57 is a binding site for beta-alanine. Residue 144 to 147 (GKKD) participates in ATP binding. Glutamine 150 contacts (R)-pantoate. Residues valine 173 and 181 to 184 (LSSR) contribute to the ATP site.

This sequence belongs to the pantothenate synthetase family. As to quaternary structure, homodimer.

It is found in the cytoplasm. It catalyses the reaction (R)-pantoate + beta-alanine + ATP = (R)-pantothenate + AMP + diphosphate + H(+). Its pathway is cofactor biosynthesis; (R)-pantothenate biosynthesis; (R)-pantothenate from (R)-pantoate and beta-alanine: step 1/1. Functionally, catalyzes the condensation of pantoate with beta-alanine in an ATP-dependent reaction via a pantoyl-adenylate intermediate. This chain is Pantothenate synthetase, found in Paraburkholderia phymatum (strain DSM 17167 / CIP 108236 / LMG 21445 / STM815) (Burkholderia phymatum).